The primary structure comprises 378 residues: GDP-mannose 3,5-epimerase 1 (378 aa).

NAD(+)-binding positions include 36 to 62 (GAGG…SDWK), aspartate 60, and aspartate 80. Residues glycine 105 and 145-147 (SAC) contribute to the substrate site. Residues tyrosine 175 and lysine 179 each contribute to the NAD(+) site. Residue tyrosine 175 is the Proton acceptor of the active site. Substrate-binding positions include asparagine 204, 217–219 (EKA), lysine 226, 242–244 (QTR), arginine 307, and serine 357.

Belongs to the NAD(P)-dependent epimerase/dehydratase family. Homodimer. The cofactor is NAD(+).

It catalyses the reaction GDP-alpha-D-mannose = GDP-beta-L-gulose. The enzyme catalyses GDP-beta-L-gulose = GDP-beta-L-galactose. It functions in the pathway cofactor biosynthesis; L-ascorbate biosynthesis via GDP-alpha-D-mannose pathway; L-ascorbate from GDP-alpha-D-mannose: step 1/5. With respect to regulation, strongly activated by NAD. Activated by NADP. Slightly activated by NADH and NADPH. Inhibited by GDP. Catalyzes a reversible epimerization of GDP-D-mannose that precedes the committed step in the biosynthesis of vitamin C (L-ascorbate), resulting in the hydrolysis of the highly energetic glycosyl-pyrophosphoryl linkage. Able to catalyze 2 distinct epimerization reactions and can release both GDP-L-galactose and GDP-L-gulose from GDP-mannose. In Oryza sativa subsp. japonica (Rice), this protein is GDP-mannose 3,5-epimerase 1 (GME-1).